Reading from the N-terminus, the 335-residue chain is Arylacetonitrilase (335 aa).

The region spanning Leu6–Met291 is the CN hydrolase domain. Glu46 serves as the catalytic Proton acceptor. Residue Lys127 is part of the active site. The active-site Nucleophile is the Cys168.

Belongs to the carbon-nitrogen hydrolase superfamily. Nitrilase family.

The enzyme catalyses a nitrile + 2 H2O = a carboxylate + NH4(+). It catalyses the reaction 4-chlorophenylacetonitrile + 2 H2O = 4-chlorophenylacetate + NH4(+). Functionally, nitrilase that hydrolyzes preferentially phenylacetonitrile, (R,S)-mandelonitrile, and 3-indolylacetonitrile. The protein is Arylacetonitrilase of Arthroderma benhamiae (strain ATCC MYA-4681 / CBS 112371) (Trichophyton mentagrophytes).